The sequence spans 447 residues: UDP-N-acetylmuramoylalanine--D-glutamate ligase (447 aa).

Position 112 to 118 (112 to 118) interacts with ATP; that stretch reads GTNGKST.

Belongs to the MurCDEF family.

It is found in the cytoplasm. It carries out the reaction UDP-N-acetyl-alpha-D-muramoyl-L-alanine + D-glutamate + ATP = UDP-N-acetyl-alpha-D-muramoyl-L-alanyl-D-glutamate + ADP + phosphate + H(+). Its pathway is cell wall biogenesis; peptidoglycan biosynthesis. Its function is as follows. Cell wall formation. Catalyzes the addition of glutamate to the nucleotide precursor UDP-N-acetylmuramoyl-L-alanine (UMA). This chain is UDP-N-acetylmuramoylalanine--D-glutamate ligase, found in Legionella pneumophila (strain Lens).